The chain runs to 347 residues: NADH-ubiquinone oxidoreductase chain 2 (347 aa).

A run of 11 helical transmembrane segments spans residues 3-23 (PMTF…VLLS), 25-45 (HWFM…PVLM), 59-79 (YFLT…INTM), 96-116 (ILIT…FWVP), 127-147 (GLIL…QIYP), 149-169 (LNTN…GWGG), 178-198 (IMAY…TYNP), 201-221 (SLLN…LLII), 239-259 (IVTT…PLTG), 274-294 (NSLI…FFYM), and 326-346 (TAPL…LITL).

The protein belongs to the complex I subunit 2 family. As to quaternary structure, core subunit of respiratory chain NADH dehydrogenase (Complex I) which is composed of 45 different subunits. Interacts with TMEM242.

The protein localises to the mitochondrion inner membrane. The enzyme catalyses a ubiquinone + NADH + 5 H(+)(in) = a ubiquinol + NAD(+) + 4 H(+)(out). Core subunit of the mitochondrial membrane respiratory chain NADH dehydrogenase (Complex I) which catalyzes electron transfer from NADH through the respiratory chain, using ubiquinone as an electron acceptor. Essential for the catalytic activity and assembly of complex I. This Sylvisorex ollula (Greater forest shrew) protein is NADH-ubiquinone oxidoreductase chain 2.